The primary structure comprises 305 residues: Ornithine carbamoyltransferase (305 aa).

Carbamoyl phosphate is bound by residues 54–57, Gln81, Arg105, and 132–135; these read STRT and HPCQ. L-ornithine is bound by residues Asn163, Asp220, and 224 to 225; that span reads SM. Residues 260 to 261 and Arg288 contribute to the carbamoyl phosphate site; that span reads CL.

It belongs to the aspartate/ornithine carbamoyltransferase superfamily. OTCase family.

The protein resides in the cytoplasm. The enzyme catalyses carbamoyl phosphate + L-ornithine = L-citrulline + phosphate + H(+). The protein operates within amino-acid biosynthesis; L-arginine biosynthesis; L-arginine from L-ornithine and carbamoyl phosphate: step 1/3. Functionally, reversibly catalyzes the transfer of the carbamoyl group from carbamoyl phosphate (CP) to the N(epsilon) atom of ornithine (ORN) to produce L-citrulline. This Chromohalobacter salexigens (strain ATCC BAA-138 / DSM 3043 / CIP 106854 / NCIMB 13768 / 1H11) protein is Ornithine carbamoyltransferase.